Reading from the N-terminus, the 619-residue chain is Keratin, type II cytoskeletal 1 (619 aa).

Positions 1–180 (MSRHFSSRSG…DPEIQKVKTR (180 aa)) are head. Arg-12 carries the post-translational modification Omega-N-methylarginine. Phosphoserine is present on residues Ser-18 and Ser-21. The segment at 28–49 (QRRTTSSSVRHSGGGGGRFSGG) is disordered. Positions 39-49 (SGGGGGRFSGG) are enriched in gly residues. The residue at position 45 (Arg-45) is an Omega-N-methylarginine. At Ser-68 the chain carries Phosphoserine. A coiled-coil region spans residues 173–477 (EIQKVKTRER…ELMNTKLALD (305 aa)). The interval 181–216 (EREQIKSLNNQFASFIDKVRFLEQQNQVLQTKWELL) is coil 1A. The 314-residue stretch at 181–494 (EREQIKSLNN…TLLEGEESRM (314 aa)) folds into the IF rod domain. A linker 1 region spans residues 217 to 235 (QQVDTSTRTHSLEPYFENY). A coil 1B region spans residues 236–327 (ISNLRRRVDQ…TLYQAELSQM (92 aa)). An N6,N6-dimethyllysine modification is found at Lys-277. Residues 328-351 (QTQISETNVILSMDNNRSLDLDSI) form a linker 12 region. Ser-345 carries the phosphoserine modification. The coil 2 stretch occupies residues 352-490 (ISEVKAQYEE…ATYRTLLEGE (139 aa)). Residues 491-619 (ESRMSGECAP…VSTSYSRAVR (129 aa)) form a tail region. Residues Arg-519 and Arg-575 each carry the omega-N-methylarginine modification. Positions 559-619 (GGGGGGYGSS…VSTSYSRAVR (61 aa)) are disordered. A compositionally biased stretch (gly residues) spans 573 to 595 (GHRGGSGGGSRSGGSSGGRGSSS). Low complexity predominate over residues 596–606 (GGIKTSSGSSS). Positions 607 to 619 (VKFVSTSYSRAVR) are enriched in polar residues.

This sequence belongs to the intermediate filament family. As to quaternary structure, heterotetramer of two type I and two type II keratins. Heterodimer with KRT10. Two heterodimers of KRT1 and KRT10 form a heterotetramer. Forms a heterodimer with KRT14; the interaction is more abundant in the absence of KRT5. Interacts with ITGB1 in the presence of RACK1 and SRC, and with RACK1. Interacts with C1QBP; the association represents a cell surface kininogen receptor. Interacts with EPPK1; interaction is dependent of higher-order structure of intermediate filament. In terms of processing, undergoes deimination of some arginine residues (citrullination).

The protein localises to the cell membrane. It localises to the cytoplasm. May regulate the activity of kinases such as PKC and SRC via binding to integrin beta-1 (ITB1) and the receptor of activated protein C kinase 1 (RACK1). In complex with C1QBP is a high affinity receptor for kininogen-1/HMWK. The chain is Keratin, type II cytoskeletal 1 from Canis lupus familiaris (Dog).